We begin with the raw amino-acid sequence, 199 residues long: Crossover junction endodeoxyribonuclease RuvC (199 aa).

Residues D17, E76, and D148 contribute to the active site. Positions 17, 76, and 148 each coordinate Mg(2+).

It belongs to the RuvC family. Homodimer which binds Holliday junction (HJ) DNA. The HJ becomes 2-fold symmetrical on binding to RuvC with unstacked arms; it has a different conformation from HJ DNA in complex with RuvA. In the full resolvosome a probable DNA-RuvA(4)-RuvB(12)-RuvC(2) complex forms which resolves the HJ. Mg(2+) serves as cofactor.

The protein localises to the cytoplasm. The catalysed reaction is Endonucleolytic cleavage at a junction such as a reciprocal single-stranded crossover between two homologous DNA duplexes (Holliday junction).. Functionally, the RuvA-RuvB-RuvC complex processes Holliday junction (HJ) DNA during genetic recombination and DNA repair. Endonuclease that resolves HJ intermediates. Cleaves cruciform DNA by making single-stranded nicks across the HJ at symmetrical positions within the homologous arms, yielding a 5'-phosphate and a 3'-hydroxyl group; requires a central core of homology in the junction. The consensus cleavage sequence is 5'-(A/T)TT(C/G)-3'. Cleavage occurs on the 3'-side of the TT dinucleotide at the point of strand exchange. HJ branch migration catalyzed by RuvA-RuvB allows RuvC to scan DNA until it finds its consensus sequence, where it cleaves and resolves the cruciform DNA. The protein is Crossover junction endodeoxyribonuclease RuvC of Mannheimia succiniciproducens (strain KCTC 0769BP / MBEL55E).